Here is a 345-residue protein sequence, read N- to C-terminus: Arginine-hydroxylase NDUFAF5, mitochondrial (345 aa).

A mitochondrion-targeting transit peptide spans 1–36 (MLRPAGLWRLCRRPWAARVPAENLGRREVTSGVSPR).

The protein belongs to the methyltransferase superfamily. Interacts with NDUFAF8, leading to stabilize NDUFAF5. Interacts with NDUFS7. Interacts with PYURF (via TRM112 domain); the interaction is direct and stabilizes NDUFAF5 protein.

The protein resides in the mitochondrion inner membrane. Arginine hydroxylase that mediates hydroxylation of 'Arg-111' of NDUFS7 and is involved in the assembly of mitochondrial NADH:ubiquinone oxidoreductase complex (complex I, MT-ND1) at early stages. May also have methyltransferase activity. The chain is Arginine-hydroxylase NDUFAF5, mitochondrial from Homo sapiens (Human).